The following is a 307-amino-acid chain: tRNA-cytidine(32) 2-sulfurtransferase (307 aa).

The PP-loop motif signature appears at 44 to 49 (SGGKDS). 3 residues coordinate [4Fe-4S] cluster: Cys119, Cys122, and Cys210.

It belongs to the TtcA family. In terms of assembly, homodimer. Mg(2+) is required as a cofactor. Requires [4Fe-4S] cluster as cofactor.

It localises to the cytoplasm. It catalyses the reaction cytidine(32) in tRNA + S-sulfanyl-L-cysteinyl-[cysteine desulfurase] + AH2 + ATP = 2-thiocytidine(32) in tRNA + L-cysteinyl-[cysteine desulfurase] + A + AMP + diphosphate + H(+). The protein operates within tRNA modification. Functionally, catalyzes the ATP-dependent 2-thiolation of cytidine in position 32 of tRNA, to form 2-thiocytidine (s(2)C32). The sulfur atoms are provided by the cysteine/cysteine desulfurase (IscS) system. The polypeptide is tRNA-cytidine(32) 2-sulfurtransferase (Aliivibrio salmonicida (strain LFI1238) (Vibrio salmonicida (strain LFI1238))).